The following is a 687-amino-acid chain: Guanine-nucleotide exchange factor YEL1 (687 aa).

Over residues 14 to 27 the composition is skewed to polar residues; that stretch reads YGVSQKGYNDNFSE. Disordered regions lie at residues 14–35 and 63–97; these read YGVS…LHGS and AAND…TDQN. The 208-residue stretch at 57–264 folds into the SEC7 domain; the sequence is ILQNKEAAND…SEYYKTLNET (208 aa). The span at 73–83 shows a compositional bias: low complexity; the sequence is TTDTATAGTGT. At threonine 290 the chain carries Phosphothreonine. Phosphoserine occurs at positions 293 and 299. A PH domain is found at 412–551; it reads ASRRTSLSYL…DCINFWAGRI (140 aa).

Belongs to the YEL1 family.

The protein localises to the cytoplasm. Its subcellular location is the cell membrane. It localises to the bud neck. It is found in the bud tip. Functionally, guanine nucleotide exchange factor for ARF3 required for localization of ARF3 to the bud neck and tip and involved in actin patch polarization. The chain is Guanine-nucleotide exchange factor YEL1 (YEL1) from Saccharomyces cerevisiae (strain RM11-1a) (Baker's yeast).